A 41-amino-acid polypeptide reads, in one-letter code: Disintegrin viperistatin (41 aa).

Cystine bridges form between C1/C10, C6/C29, C7/C34, and C19/C36. Residues 1 to 41 (CTTGPCCRQCKLKPAGTTCWKTSRTSHYCTGKSCDCPVYQG) form the Disintegrin domain. The Cell attachment site; atypical (KTS) signature appears at 21-23 (KTS).

Monomer. Expressed by the venom gland.

The protein localises to the secreted. Functionally, potent and highly selective inhibitor of alpha-1/beta-1 (ITGA1/ITGB1) integrin binding to collagen I and IV. Is about 25-fold more potent than obtustatin inhibiting the binding of this integrin to collagen IV. The protein is Disintegrin viperistatin of Daboia palaestinae (Palestine viper).